We begin with the raw amino-acid sequence, 430 residues long: tRNA-2-methylthio-N(6)-dimethylallyladenosine synthase (430 aa).

The region spanning 1–110 (MKVHIFTYGC…VPDAVLNAKN (110 aa)) is the MTTase N-terminal domain. Residues C10, C46, C75, C146, C150, and C153 each contribute to the [4Fe-4S] cluster site. The Radical SAM core domain occupies 132–363 (RSSNHHAWVT…LNLQKTINKE (232 aa)). The TRAM domain occupies 366 to 427 (KSYLGKEVEV…AGPLYGEIKK (62 aa)).

The protein belongs to the methylthiotransferase family. MiaB subfamily. Monomer. Requires [4Fe-4S] cluster as cofactor.

It localises to the cytoplasm. The catalysed reaction is N(6)-dimethylallyladenosine(37) in tRNA + (sulfur carrier)-SH + AH2 + 2 S-adenosyl-L-methionine = 2-methylsulfanyl-N(6)-dimethylallyladenosine(37) in tRNA + (sulfur carrier)-H + 5'-deoxyadenosine + L-methionine + A + S-adenosyl-L-homocysteine + 2 H(+). Its function is as follows. Catalyzes the methylthiolation of N6-(dimethylallyl)adenosine (i(6)A), leading to the formation of 2-methylthio-N6-(dimethylallyl)adenosine (ms(2)i(6)A) at position 37 in tRNAs that read codons beginning with uridine. The polypeptide is tRNA-2-methylthio-N(6)-dimethylallyladenosine synthase (Fervidobacterium nodosum (strain ATCC 35602 / DSM 5306 / Rt17-B1)).